The following is a 625-amino-acid chain: MGFSKIALFSLFALFGLPTSLAKSSEEWRDRIIYQVITDRFAVDSDNTPDCSFDDSSYCGGTWSGIRSKLDYIQGMGFNAIWISPVEKNLEGSYGSDGEAYHGYWNTDFTQLNEHFGSEDDLIDLITDMHNRDMWIMFDALANSMAIPGPTDNISYSNLVPFNDSSYFHPYCWIDYGSNNNTDIEDCWTGDDNVILADLDIESTNVADYLHEHIHDMVERYQIDGIRIDAVKQMNPEFFPNYTSAAGVFAIGEMFSYDPNVSCSVRNYLDSITSYPIRQGIEFAFNYTGAAFEYLQEIDTQFQQACEGQDMSVIGNFLENHDLPRYTSITNDTSQDIGAIVFLLLHTGIPIIYYGEEQRLPGGSDTPENRAALWNYGYDTDANYYQTIRTAIALRKQAISDSDSWTTDSHSYLDYDLRHAVVRKGDVLGVYTNYESSSDNVTYDVSSNFDDGTVLREVLSNTTTTVGSSGALHVTVVSGLPQVYYPEASLTSFGNFLGTATSYSSASASYPSTSMSASLSSVHTSSATSSSKSSSSSSSRSGSSSSSSSRSGSTSSSGSSHTITSTSQSVHTSGSSTSTSSVAVTSTAYSSSSSSSSSSSIESSANAVRVSILGVAAFIAIVLFI.

A signal peptide spans 1–22; it reads MGFSKIALFSLFALFGLPTSLA. The cysteines at positions 51 and 59 are disulfide-linked. A substrate-binding site is contributed by Trp105. Position 143 (Asn143) interacts with Ca(2+). N-linked (GlcNAc...) asparagine glycans are attached at residues Asn153, Asn163, and Asn180. Cys172 and Cys187 are joined by a disulfide. Positions 185 and 198 each coordinate Ca(2+). Arg227 contributes to the substrate binding site. Ca(2+) is bound at residue Asp229. The active-site Nucleophile is Asp229. 232 to 233 is a binding site for substrate; that stretch reads KQ. Residue Asn241 is glycosylated (N-linked (GlcNAc...) asparagine). Residue Glu253 coordinates Ca(2+). Catalysis depends on Glu253, which acts as the Proton donor. N-linked (GlcNAc...) asparagine glycosylation is found at Asn260 and Asn286. A disulfide bridge links Cys263 with Cys306. A substrate-binding site is contributed by Asp322. Asn331 is a glycosylation site (N-linked (GlcNAc...) asparagine). Arg370 is a binding site for substrate. N-linked (GlcNAc...) asparagine glycosylation is found at Asn440 and Asn461. A disordered region spans residues 526–579; it reads SATSSSKSSSSSSSRSGSSSSSSSRSGSTSSSGSSHTITSTSQSVHTSGSSTST. Ser603 is lipidated: GPI-anchor amidated serine. Residues 604-625 constitute a propeptide, removed in mature form; sequence SANAVRVSILGVAAFIAIVLFI.

This sequence belongs to the glycosyl hydrolase 13 family. Requires Ca(2+) as cofactor.

It localises to the cell membrane. The enzyme catalyses Endohydrolysis of (1-&gt;4)-alpha-D-glucosidic linkages in polysaccharides containing three or more (1-&gt;4)-alpha-linked D-glucose units.. The sequence is that of Alpha-amylase 1 (aah1) from Schizosaccharomyces pombe (strain 972 / ATCC 24843) (Fission yeast).